Consider the following 459-residue polypeptide: Periodic tryptophan protein 1 homolog (459 aa).

The interval G44 to R84 is disordered. Over residues Q48–V73 the composition is skewed to acidic residues. Residues D74–R84 are compositionally biased toward basic and acidic residues. WD repeat units follow at residues L168 to P214, G232 to T272, A275 to S315, K321 to W361, and A365 to V405. S385 bears the Phosphoserine mark.

It belongs to the WD repeat PWP1 family. Interacts with Mybbp1A. In terms of processing, phosphorylated in response to nutrient-activated TORC1 signaling. In terms of tissue distribution, detected in the germline of adult testis and ovary (at protein level). Detected in ovary somatic cells, in zfh1-positive cyst cells in the testis and absent in differentiated cyst cells (at protein level).

Its subcellular location is the nucleus. It localises to the nucleolus. The protein resides in the chromosome. The protein localises to the nucleoplasm. Functionally, chromatin-associated factor that regulates transcription. Regulates Pol I-mediated rRNA biogenesis and, probably, Pol III-mediated transcription. Regulates the localization to the nucleolus of Cdk7, a regulator of the Pol I-elongation factor TFIIH. Acts as a regulator of cell proliferation and tissue growth as part of the TORC1 and Myc signaling pathway in response to nutrients. Required in males for both germline stem cell (GSC) maintenance and early stages of germ cell differentiation of germ cell cysts. Not required for female germline stem cell (GSC) maintenance, but necessary to regulate germ cell differentiation and egg chamber development. In female somatic cells, required for follicle stem cell survival and maintenance. In Drosophila melanogaster (Fruit fly), this protein is Periodic tryptophan protein 1 homolog.